The following is a 174-amino-acid chain: Chorion protein S18 (174 aa).

Positions 1 to 17 are cleaved as a signal peptide; sequence MMKFMCIFICAVAAVSA. Residues 154–165 show a composition bias toward low complexity; that stretch reads AAAASSSVAGVA. A disordered region spans residues 154–174; that stretch reads AAAASSSVAGVAKKGYRKSSY.

This sequence belongs to the chorion protein S15/S18 family.

The protein localises to the secreted. Its function is as follows. Chorion membrane (egg shell) protein; plays a role in protecting the egg from the environment. This Drosophila subobscura (Fruit fly) protein is Chorion protein S18 (Cp18).